Reading from the N-terminus, the 69-residue chain is Small ribosomal subunit protein uS7 (69 aa).

Belongs to the universal ribosomal protein uS7 family. Part of the 30S ribosomal subunit.

Functionally, one of the primary rRNA binding proteins, it binds directly to 16S rRNA where it nucleates assembly of the head domain of the 30S subunit. Is located at the subunit interface close to the decoding center. The sequence is that of Small ribosomal subunit protein uS7 (rps7) from Methanococcoides methylutens.